The following is a 287-amino-acid chain: Maleylpyruvate hydrolase (287 aa).

A divalent metal cation is bound by residues E143, E145, and D174.

This sequence belongs to the FAH family. In terms of assembly, homodimer.

The enzyme catalyses 3-maleylpyruvate + H2O = maleate + pyruvate + H(+). With respect to regulation, activated by Mn(2+). Inhibited by Ni(2+), Cd(2+), Co(2+) or Cu(2+). In terms of biological role, involved in the degradation of gentisate. Catalyzes the hydrolysis of 3-maleylpyruvate, the ring-cleavage product of gentisate. This chain is Maleylpyruvate hydrolase, found in Aquipseudomonas alcaligenes (Pseudomonas alcaligenes).